A 278-amino-acid chain; its full sequence is Formamidopyrimidine-DNA glycosylase (278 aa).

The active-site Schiff-base intermediate with DNA is the Pro-2. Catalysis depends on Glu-3, which acts as the Proton donor. The active-site Proton donor; for beta-elimination activity is the Lys-57. His-90, Arg-109, and Lys-150 together coordinate DNA. Residues 235 to 269 form an FPG-type zinc finger; the sequence is QVYGRAGEPCRQCGHPIEIAKHGQRSTFFCRHCQF. The active-site Proton donor; for delta-elimination activity is Arg-259.

Belongs to the FPG family. As to quaternary structure, monomer. It depends on Zn(2+) as a cofactor.

It catalyses the reaction Hydrolysis of DNA containing ring-opened 7-methylguanine residues, releasing 2,6-diamino-4-hydroxy-5-(N-methyl)formamidopyrimidine.. The catalysed reaction is 2'-deoxyribonucleotide-(2'-deoxyribose 5'-phosphate)-2'-deoxyribonucleotide-DNA = a 3'-end 2'-deoxyribonucleotide-(2,3-dehydro-2,3-deoxyribose 5'-phosphate)-DNA + a 5'-end 5'-phospho-2'-deoxyribonucleoside-DNA + H(+). Its function is as follows. Involved in base excision repair of DNA damaged by oxidation or by mutagenic agents. Acts as a DNA glycosylase that recognizes and removes damaged bases. Has a preference for oxidized purines, such as 7,8-dihydro-8-oxoguanine (8-oxoG). Has AP (apurinic/apyrimidinic) lyase activity and introduces nicks in the DNA strand. Cleaves the DNA backbone by beta-delta elimination to generate a single-strand break at the site of the removed base with both 3'- and 5'-phosphates. The protein is Formamidopyrimidine-DNA glycosylase of Yersinia pestis (strain Pestoides F).